The sequence spans 236 residues: MGLGLGVRAAPFTYAAHALAVAAAAMVLVWSIQFRGGLAIESTNKNLIFNVHPVLMLIGYVIIGGEAIMVYRVLPTSNHDTTKLIHLILHGIALVLGAVGIYFAFKNHNESGIANLYSLHSWIGIGTITLYGIQWIIGFVTFFFPGAAPNVKKGVLPWHVLFGLFVYILALANAELGFLEKLTFLESSGLDKYGTEAFLVNFTALVVVLFGASVVVAAIAPVRLEEPQGYDPIPEN.

The Cytoplasmic portion of the chain corresponds to 1–11; the sequence is MGLGLGVRAAP. A helical transmembrane segment spans residues 12–32; sequence FTYAAHALAVAAAAMVLVWSI. One can recognise a Cytochrome b561 domain in the interval 15 to 219; that stretch reads AAHALAVAAA…FGASVVVAAI (205 aa). Topologically, residues 33–50 are extracellular; sequence QFRGGLAIESTNKNLIFN. A helical transmembrane segment spans residues 51 to 71; the sequence is VHPVLMLIGYVIIGGEAIMVY. Heme b is bound at residue histidine 52. 67 to 75 provides a ligand contact to L-ascorbate; it reads AIMVYRVLP. Residues 72–84 are Cytoplasmic-facing; that stretch reads RVLPTSNHDTTKL. A helical membrane pass occupies residues 85-105; the sequence is IHLILHGIALVLGAVGIYFAF. Histidine 86 and histidine 120 together coordinate heme b. The Extracellular segment spans residues 106–122; the sequence is KNHNESGIANLYSLHSW. 116 to 125 contacts monodehydro-L-ascorbate radical; that stretch reads LYSLHSWIGI. Residues 123 to 143 traverse the membrane as a helical segment; it reads IGIGTITLYGIQWIIGFVTFF. The Cytoplasmic segment spans residues 144–153; that stretch reads FPGAAPNVKK. Residues 154 to 174 traverse the membrane as a helical segment; the sequence is GVLPWHVLFGLFVYILALANA. Histidine 159 lines the heme b pocket. The Extracellular portion of the chain corresponds to 175-201; that stretch reads ELGFLEKLTFLESSGLDKYGTEAFLVN. The chain crosses the membrane as a helical span at residues 202–222; that stretch reads FTALVVVLFGASVVVAAIAPV. Over 223–236 the chain is Cytoplasmic; that stretch reads RLEEPQGYDPIPEN.

Heme b serves as cofactor.

The protein resides in the membrane. With respect to regulation, inhibited by diethylpyrocarbonate. Functionally, two-heme-containing cytochrome. Catalyzes ascorbate-dependent trans-membrane electron transfer by utilizing a concerted H(+)/e(-) transfer mechanism. The sequence is that of Ascorbate-specific transmembrane electron transporter 1 (ZCYB) from Zea mays (Maize).